Consider the following 133-residue polypeptide: Small ribosomal subunit protein uS8 (133 aa).

Belongs to the universal ribosomal protein uS8 family. In terms of assembly, part of the 30S ribosomal subunit. Contacts proteins S5 and S12.

One of the primary rRNA binding proteins, it binds directly to 16S rRNA central domain where it helps coordinate assembly of the platform of the 30S subunit. The sequence is that of Small ribosomal subunit protein uS8 from Lachnoclostridium phytofermentans (strain ATCC 700394 / DSM 18823 / ISDg) (Clostridium phytofermentans).